The sequence spans 193 residues: Potassium-transporting ATPase KdpC subunit (193 aa).

A helical transmembrane segment spans residues 14 to 34; sequence ITFTFLVLCGLVYPLIVTGIA.

The protein belongs to the KdpC family. As to quaternary structure, the system is composed of three essential subunits: KdpA, KdpB and KdpC.

The protein resides in the cell membrane. In terms of biological role, part of the high-affinity ATP-driven potassium transport (or Kdp) system, which catalyzes the hydrolysis of ATP coupled with the electrogenic transport of potassium into the cytoplasm. This subunit acts as a catalytic chaperone that increases the ATP-binding affinity of the ATP-hydrolyzing subunit KdpB by the formation of a transient KdpB/KdpC/ATP ternary complex. The polypeptide is Potassium-transporting ATPase KdpC subunit (Bacillus cereus (strain AH820)).